The sequence spans 22 residues: Putative ORF3b protein (22 aa).

Its function is as follows. Acts as an interferon antagonist when expressed ex vivo. This chain is Putative ORF3b protein, found in Severe acute respiratory syndrome coronavirus 2 (2019-nCoV).